Here is a 156-residue protein sequence, read N- to C-terminus: ATP synthase subunit b (156 aa).

Residues 7–29 (LFGQTVAFILFVWFCMKFVWPPL) form a helical membrane-spanning segment.

It belongs to the ATPase B chain family. In terms of assembly, F-type ATPases have 2 components, F(1) - the catalytic core - and F(0) - the membrane proton channel. F(1) has five subunits: alpha(3), beta(3), gamma(1), delta(1), epsilon(1). F(0) has three main subunits: a(1), b(2) and c(10-14). The alpha and beta chains form an alternating ring which encloses part of the gamma chain. F(1) is attached to F(0) by a central stalk formed by the gamma and epsilon chains, while a peripheral stalk is formed by the delta and b chains.

It is found in the cell inner membrane. In terms of biological role, f(1)F(0) ATP synthase produces ATP from ADP in the presence of a proton or sodium gradient. F-type ATPases consist of two structural domains, F(1) containing the extramembraneous catalytic core and F(0) containing the membrane proton channel, linked together by a central stalk and a peripheral stalk. During catalysis, ATP synthesis in the catalytic domain of F(1) is coupled via a rotary mechanism of the central stalk subunits to proton translocation. Functionally, component of the F(0) channel, it forms part of the peripheral stalk, linking F(1) to F(0). The sequence is that of ATP synthase subunit b from Shewanella frigidimarina (strain NCIMB 400).